A 497-amino-acid chain; its full sequence is Angiopoietin-1 (497 aa).

The signal sequence occupies residues 1–15 (MTVFLSFAFLAAILT). N-linked (GlcNAc...) asparagine glycans are attached at residues asparagine 92, asparagine 122, asparagine 154, asparagine 243, and asparagine 294. The stretch at 153–261 (LNQTSRLEIQ…LELMDTVHNL (109 aa)) forms a coiled coil. Residues 276 to 496 (KEEEKPFRDC…STTMMIRPLD (221 aa)) enclose the Fibrinogen C-terminal domain. Intrachain disulfides connect cysteine 285–cysteine 314 and cysteine 438–cysteine 451.

Homooligomer. Interacts with TEK/TIE2. Interacts with SVEP1/polydom. Interacts with THBD; this interaction significantly inhibits the generation of activated PC and TAFIa/CPB2 by the thrombin/thrombomodulin complex.

It is found in the secreted. Binds and activates TIE2 receptor by inducing its tyrosine phosphorylation. Implicated in endothelial developmental processes later and distinct from that of VEGF. Appears to play a crucial role in mediating reciprocal interactions between the endothelium and surrounding matrix and mesenchyme. Mediates blood vessel maturation/stability. It may play an important role in the heart early development. The sequence is that of Angiopoietin-1 (ANGPT1) from Bos taurus (Bovine).